The sequence spans 523 residues: Probable glucose-1-phosphate adenylyltransferase large subunit, chloroplastic (523 aa).

It belongs to the bacterial/plant glucose-1-phosphate adenylyltransferase family. Heterotetramer.

The protein resides in the plastid. It localises to the chloroplast. It catalyses the reaction alpha-D-glucose 1-phosphate + ATP + H(+) = ADP-alpha-D-glucose + diphosphate. The protein operates within glycan biosynthesis; starch biosynthesis. Its activity is regulated as follows. Activated by 3'phosphoglycerate, inhibited by orthophosphate. Allosteric regulation. This protein plays a role in synthesis of starch. It catalyzes the synthesis of the activated glycosyl donor, ADP-glucose from Glc-1-P and ATP. The polypeptide is Probable glucose-1-phosphate adenylyltransferase large subunit, chloroplastic (Arabidopsis thaliana (Mouse-ear cress)).